Consider the following 88-residue polypeptide: Large ribosomal subunit protein bL31B (88 aa).

Belongs to the bacterial ribosomal protein bL31 family. Type B subfamily. Part of the 50S ribosomal subunit.

The protein is Large ribosomal subunit protein bL31B of Corynebacterium efficiens (strain DSM 44549 / YS-314 / AJ 12310 / JCM 11189 / NBRC 100395).